A 64-amino-acid polypeptide reads, in one-letter code: Large ribosomal subunit protein eL37 (64 aa).

Residues Cys20, Cys23, Cys35, and Cys38 each coordinate Zn(2+). The C4-type zinc-finger motif lies at 20-38 (CRRCGRRAFHVRKKVCAAC).

It belongs to the eukaryotic ribosomal protein eL37 family. Zn(2+) is required as a cofactor.

Its function is as follows. Binds to the 23S rRNA. The sequence is that of Large ribosomal subunit protein eL37 from Methanococcus maripaludis (strain C6 / ATCC BAA-1332).